Reading from the N-terminus, the 313-residue chain is Ornithine carbamoyltransferase (313 aa).

Residues 57-60 (STRT), Gln84, Arg108, and 135-138 (HPCQ) contribute to the carbamoyl phosphate site. Residues Asn166, Asp230, and 234-235 (SM) each bind L-ornithine. Residues 270-271 (CL) and Arg298 each bind carbamoyl phosphate.

It belongs to the aspartate/ornithine carbamoyltransferase superfamily. OTCase family. In terms of assembly, homohexamer.

The protein resides in the cytoplasm. The catalysed reaction is carbamoyl phosphate + L-ornithine = L-citrulline + phosphate + H(+). It participates in amino-acid biosynthesis; L-arginine biosynthesis; L-arginine from L-ornithine and carbamoyl phosphate: step 1/3. Reversibly catalyzes the transfer of the carbamoyl group from carbamoyl phosphate (CP) to the N(epsilon) atom of ornithine (ORN) to produce L-citrulline. The chain is Ornithine carbamoyltransferase from Gloeobacter violaceus (strain ATCC 29082 / PCC 7421).